The chain runs to 127 residues: uncharacterized protein (127 aa).

A helical membrane pass occupies residues 5 to 25; that stretch reads ILGITIAFIILLLTTVAILFS.

It is found in the membrane. This is an uncharacterized protein from Mycoplasma genitalium (strain ATCC 33530 / DSM 19775 / NCTC 10195 / G37) (Mycoplasmoides genitalium).